Consider the following 527-residue polypeptide: Monooxygenase aurF (527 aa).

The N-terminal stretch at 1 to 19 (MPNPTVAIVGLGALGLVTL) is a signal peptide. N59 is a glycosylation site (N-linked (GlcNAc...) asparagine).

Belongs to the FMO family. Might be part of an extracellular enzyme complex composed of GIP1, aurF, aurO and aurS. The cofactor is FAD.

It localises to the secreted. It is found in the extracellular space. It participates in pigment biosynthesis. Its function is as follows. Monooxygenase; part of the gene cluster that mediates the biosynthesis of aurofusarin, a red mycelium pigment which is acting as a mycotoxin. The first step is performed by the polyketide synthase which condenses one acetyl-CoA and 6 malonyl-CoA units to form the first intermediate, the cyclic heptaketide and yellow pigment YWA1. The C2 hydroxyl group in the pyrone ring of YWA1 is probably formed during ring closure by an aldol-type cyclization reaction. The dehydratase aurZ then acts as the first tailoring enzyme in the aurofusarin biosynthetic pathway by converting YWA1 to nor-rubrofusarin. Nor-rubrofusarin is then methylated to rubrofusarin by the O-methyltransferase aurJ. Rubrofusarin is then transported across the plasma membrane by the rubrofusarin-specific pump aurT for further enzymatic processing by the extracellular complex composed of GIP1, aurF, aurO and aurS to yield aurofusarin. This chain is Monooxygenase aurF, found in Gibberella zeae (strain ATCC MYA-4620 / CBS 123657 / FGSC 9075 / NRRL 31084 / PH-1) (Wheat head blight fungus).